The following is a 160-amino-acid chain: Ribosomal RNA large subunit methyltransferase H (160 aa).

S-adenosyl-L-methionine contacts are provided by residues leucine 76, glycine 108, and 127 to 132; that span reads LGKMTW.

It belongs to the RNA methyltransferase RlmH family. As to quaternary structure, homodimer.

The protein localises to the cytoplasm. The catalysed reaction is pseudouridine(1915) in 23S rRNA + S-adenosyl-L-methionine = N(3)-methylpseudouridine(1915) in 23S rRNA + S-adenosyl-L-homocysteine + H(+). In terms of biological role, specifically methylates the pseudouridine at position 1915 (m3Psi1915) in 23S rRNA. This is Ribosomal RNA large subunit methyltransferase H from Rhizobium leguminosarum bv. trifolii (strain WSM2304).